The chain runs to 554 residues: DNA ligase (554 aa).

ATP is bound at residue glutamate 253. Catalysis depends on lysine 255, which acts as the N6-AMP-lysine intermediate. 6 residues coordinate ATP: arginine 260, arginine 275, glutamate 304, phenylalanine 344, arginine 418, and lysine 424.

This sequence belongs to the ATP-dependent DNA ligase family. Mg(2+) serves as cofactor.

It catalyses the reaction ATP + (deoxyribonucleotide)n-3'-hydroxyl + 5'-phospho-(deoxyribonucleotide)m = (deoxyribonucleotide)n+m + AMP + diphosphate.. Functionally, DNA ligase that seals nicks in double-stranded DNA during DNA replication, DNA recombination and DNA repair. The sequence is that of DNA ligase from Haloarcula marismortui (strain ATCC 43049 / DSM 3752 / JCM 8966 / VKM B-1809) (Halobacterium marismortui).